Consider the following 319-residue polypeptide: MHTYLDFEKPIAELEGKVQELKLLAQEDPSVSIGDEVSKLEQKAAQLLQETYASLTPWQKVQVARHPARPHFLDYVERLVEDFTPLAGDRLYGEDSAIVGGLGRFRGRSVMFIGHEKGSDTQGRIKHNFGMARPEGYRKAIRLMTLAERFGIPVVTLADTSGAYPGMESEERSVAEAIARSTDRCLSLGVPLISVVIGEGMSGGAIGIACGNRVLMLEHSIYSVISPEGASSILWRSSDKTKDAATAMKITAQHLHELGVIDRVLPEPVGGAHRERNQMIKETGDAIAEELKGLEKLDADSIRRVRREKFLAMGRIGFS.

Residues lysine 39 to glycine 293 enclose the CoA carboxyltransferase C-terminal domain.

The protein belongs to the AccA family. As to quaternary structure, acetyl-CoA carboxylase is a heterohexamer composed of biotin carboxyl carrier protein (AccB), biotin carboxylase (AccC) and two subunits each of ACCase subunit alpha (AccA) and ACCase subunit beta (AccD).

It is found in the cytoplasm. The catalysed reaction is N(6)-carboxybiotinyl-L-lysyl-[protein] + acetyl-CoA = N(6)-biotinyl-L-lysyl-[protein] + malonyl-CoA. It functions in the pathway lipid metabolism; malonyl-CoA biosynthesis; malonyl-CoA from acetyl-CoA: step 1/1. In terms of biological role, component of the acetyl coenzyme A carboxylase (ACC) complex. First, biotin carboxylase catalyzes the carboxylation of biotin on its carrier protein (BCCP) and then the CO(2) group is transferred by the carboxyltransferase to acetyl-CoA to form malonyl-CoA. The chain is Acetyl-coenzyme A carboxylase carboxyl transferase subunit alpha from Parvibaculum lavamentivorans (strain DS-1 / DSM 13023 / NCIMB 13966).